The primary structure comprises 277 residues: Shikimate dehydrogenase (NADP(+)) (277 aa).

Shikimate-binding positions include 15-17 (SLS) and threonine 62. The active-site Proton acceptor is the lysine 66. 2 residues coordinate shikimate: asparagine 87 and aspartate 102. NADP(+) contacts are provided by residues 127 to 131 (GAGGA), 151 to 156 (NRTVDK), and isoleucine 219. Tyrosine 221 contacts shikimate. Residue glycine 242 participates in NADP(+) binding.

The protein belongs to the shikimate dehydrogenase family. In terms of assembly, homodimer.

It carries out the reaction shikimate + NADP(+) = 3-dehydroshikimate + NADPH + H(+). The protein operates within metabolic intermediate biosynthesis; chorismate biosynthesis; chorismate from D-erythrose 4-phosphate and phosphoenolpyruvate: step 4/7. Involved in the biosynthesis of the chorismate, which leads to the biosynthesis of aromatic amino acids. Catalyzes the reversible NADPH linked reduction of 3-dehydroshikimate (DHSA) to yield shikimate (SA). The sequence is that of Shikimate dehydrogenase (NADP(+)) from Bacillus cereus (strain ZK / E33L).